The following is a 467-amino-acid chain: MRLPRHIGPIHFVGIGGIGMSGIAEVLCNLGYTVQGSDASESANVNRLREKGIQIHVGHQADNIKGADVLVVSTAIKRDNPELLAARAQRIPVVRRAEMLAELMRLKSCVAIAGTHGKTTTTSMVAALLDAGDLDPTVINGGIINAYGTNARLGGGDWMVVEADESDGTFLKLPADVAIVTNVDPEHLDHFKTFDAVQDAFRNFVENVPFYGFAVMCIDHPVVQTLVGKIEDRRIITYGENPQADARLLDLAASGGGSTFKVAFRDRKAGTAHEIADLKLPMPGRHNALNATAAIAVAHELGLSDDTIRKALAAFGGVRRRFTKTGEWNGVTIIDDYGHHPVEIAAVLKAARQSTSGKVIAVVQPHRFSRLQSLFEEFCTCFNDADAVIVADVYPAGEAPIEGIDRDHFVLGLRAHGHRDVVALQDSASLAGVVAGLAHSGDYVVCLGAGNITQWAYALPGELKALG.

Position 114 to 120 (114 to 120) interacts with ATP; that stretch reads GTHGKTT.

This sequence belongs to the MurCDEF family.

It is found in the cytoplasm. It catalyses the reaction UDP-N-acetyl-alpha-D-muramate + L-alanine + ATP = UDP-N-acetyl-alpha-D-muramoyl-L-alanine + ADP + phosphate + H(+). It participates in cell wall biogenesis; peptidoglycan biosynthesis. Its function is as follows. Cell wall formation. In Rhodopseudomonas palustris (strain TIE-1), this protein is UDP-N-acetylmuramate--L-alanine ligase.